The following is a 671-amino-acid chain: UvrABC system protein B (671 aa).

A Helicase ATP-binding domain is found at 25–412; it reads EGIDAGLAHQ…AGRVVEQVVR (388 aa). 38–45 provides a ligand contact to ATP; sequence GVTGSGKT. The Beta-hairpin motif lies at 91 to 114; the sequence is YYDYYQPEAYVPSSDTFIEKDASI. Residues 429–595 form the Helicase C-terminal domain; that stretch reads QVDDLLSEIH…GVFKDVADIM (167 aa). Positions 600–624 are disordered; the sequence is VPGSRSKKRKGMAKAAEENARYENE. Residues 614-624 show a composition bias toward basic and acidic residues; the sequence is AAEENARYENE. The UVR domain occupies 632–667; it reads NKRIRQLEEKMYQLARDLEFEAAAQMRDEIGKLRER.

Belongs to the UvrB family. Forms a heterotetramer with UvrA during the search for lesions. Interacts with UvrC in an incision complex.

The protein localises to the cytoplasm. Its function is as follows. The UvrABC repair system catalyzes the recognition and processing of DNA lesions. A damage recognition complex composed of 2 UvrA and 2 UvrB subunits scans DNA for abnormalities. Upon binding of the UvrA(2)B(2) complex to a putative damaged site, the DNA wraps around one UvrB monomer. DNA wrap is dependent on ATP binding by UvrB and probably causes local melting of the DNA helix, facilitating insertion of UvrB beta-hairpin between the DNA strands. Then UvrB probes one DNA strand for the presence of a lesion. If a lesion is found the UvrA subunits dissociate and the UvrB-DNA preincision complex is formed. This complex is subsequently bound by UvrC and the second UvrB is released. If no lesion is found, the DNA wraps around the other UvrB subunit that will check the other stand for damage. The polypeptide is UvrABC system protein B (Pseudomonas savastanoi pv. phaseolicola (strain 1448A / Race 6) (Pseudomonas syringae pv. phaseolicola (strain 1448A / Race 6))).